Reading from the N-terminus, the 432-residue chain is Glutamyl-tRNA reductase (432 aa).

Residues 55–58 (TCNR), Ser114, 119–121 (ETQ), and Gln125 contribute to the substrate site. Catalysis depends on Cys56, which acts as the Nucleophile. 194–199 (GAGEMI) provides a ligand contact to NADP(+).

Belongs to the glutamyl-tRNA reductase family. Homodimer.

It carries out the reaction (S)-4-amino-5-oxopentanoate + tRNA(Glu) + NADP(+) = L-glutamyl-tRNA(Glu) + NADPH + H(+). Its pathway is porphyrin-containing compound metabolism; protoporphyrin-IX biosynthesis; 5-aminolevulinate from L-glutamyl-tRNA(Glu): step 1/2. In terms of biological role, catalyzes the NADPH-dependent reduction of glutamyl-tRNA(Glu) to glutamate 1-semialdehyde (GSA). In Burkholderia orbicola (strain AU 1054), this protein is Glutamyl-tRNA reductase.